Reading from the N-terminus, the 356-residue chain is GATA zinc finger domain-containing protein 17 (356 aa).

Residues 91–119 (LKEFDALEASLNAELECLELQYSSDTSEL) adopt a coiled-coil conformation. Residues 158–188 (TASTSTSTPTNTTTTTTTTSNSLTKNNNSAL) are compositionally biased toward low complexity. Residues 158–294 (TASTSTSTPT…DITEESKVKE (137 aa)) are disordered. Acidic residues predominate over residues 206 to 228 (SSDDEEDDQKDDQDKDDSDEDNV). Low complexity predominate over residues 260 to 284 (TAITTTTTPITTTDSNIIGTTTTTD). The segment at 304–331 (CYVCKVTETPYWRRGTDNGVVVDLCNEC) adopts a GATA-type zinc-finger fold.

The chain is GATA zinc finger domain-containing protein 17 (gtaQ) from Dictyostelium discoideum (Social amoeba).